The chain runs to 58 residues: KappaPI-actitoxin-Avd3b (58 aa).

The region spanning 5–55 is the BPTI/Kunitz inhibitor domain; the sequence is CLLPMDVGRCRASHPRYYYNSSSKRCEKFIYGGCRGNANNFHTLEECEKVC. Disulfide bonds link cysteine 5-cysteine 55, cysteine 14-cysteine 38, and cysteine 30-cysteine 51.

It belongs to the venom Kunitz-type family. Sea anemone type 2 potassium channel toxin subfamily.

It is found in the secreted. It localises to the nematocyst. In terms of biological role, dual-function toxin that inhibits both the serine protease trypsin (Kd&lt;30 nM) and voltage-gated potassium channels Kv1.2/KCNA2 (IC(50)=2800 nM). The chain is KappaPI-actitoxin-Avd3b from Anemonia sulcata (Mediterranean snakelocks sea anemone).